The chain runs to 393 residues: Cyclic GMP-AMP synthase-like receptor 1 (393 aa).

Residues E89, D91, and D205 each coordinate Mg(2+). ATP is bound at residue 89-91 (EFD). GTP is bound by residues D205 and 251–258 (RASFYEAE). ATP-binding positions include 255 to 258 (YEAE), K276, and 289 to 293 (SYHIK).

The protein belongs to the mab-21 family. It depends on Mg(2+) as a cofactor. Requires Mn(2+) as cofactor.

It carries out the reaction GTP + ATP = 3',2'-cGAMP + 2 diphosphate. The catalysed reaction is GTP + ATP = pppA(2'-5')pG + diphosphate. The enzyme catalyses pppA(2'-5')pG = 3',2'-cGAMP + diphosphate. The enzyme activity is specifically activated by double-stranded RNA (dsRNA). Recognizes long dsRNA (&gt;30 bp) with no preference for 5' RNA phosphorylation. Functionally, nucleotidyltransferase that catalyzes the formation of cyclic GMP-AMP (3',2'-cGAMP) from ATP and GTP and plays a key role in innate immunity. Synthesizes 3',2'-cGAMP in a two-step reaction through production of the linear intermediate pppA(2'-5')pG. Acts as a key sensor of double-stranded RNA (dsRNA), the presence of dsRNA in the cytoplasm being a danger signal that triggers the immune responses. Directly binds dsRNA longer than 35 bp, activating the nucleotidyltransferase activity, leading to synthesis of 3',2'-cGAMP, a second messenger that binds to and activates Sting, thereby triggering the antiviral immune response via activation of the NF-kappa-B transcription factor Rel (Relish). In Drosophila simulans (Fruit fly), this protein is Cyclic GMP-AMP synthase-like receptor 1.